The primary structure comprises 249 residues: Selenoprotein BthD (249 aa).

Residues M1 to L22 form a disordered region. The segment covering K8–G19 has biased composition (basic and acidic residues). A cross-link (cysteinyl-selenocysteine (Cys-Sec); redox-active) is located at residues C34–U37. U37 is a non-standard amino acid (selenocysteine). Residues Q122–R249 are disordered. S147 carries the post-translational modification Phosphoserine. Basic and acidic residues predominate over residues E175 to K198. Residues T199–A210 show a composition bias toward basic residues.

Expressed in the developing salivary gland at late stages of embryogenesis. Also expressed in brain, neuroblast and wing disk.

Its subcellular location is the cytoplasm. The protein localises to the secreted. Its function is as follows. May be involved in a redox-related process. Required for survival and specifically for salivary gland morphogenesis. In Drosophila melanogaster (Fruit fly), this protein is Selenoprotein BthD (BthD).